The chain runs to 156 residues: Ribosomal RNA large subunit methyltransferase H (156 aa).

Residues Leu73, Gly104, and 123-128 contribute to the S-adenosyl-L-methionine site; that span reads LSPLTL.

The protein belongs to the RNA methyltransferase RlmH family. As to quaternary structure, homodimer.

It localises to the cytoplasm. The enzyme catalyses pseudouridine(1915) in 23S rRNA + S-adenosyl-L-methionine = N(3)-methylpseudouridine(1915) in 23S rRNA + S-adenosyl-L-homocysteine + H(+). Its function is as follows. Specifically methylates the pseudouridine at position 1915 (m3Psi1915) in 23S rRNA. This Edwardsiella ictaluri (strain 93-146) protein is Ribosomal RNA large subunit methyltransferase H.